Here is a 116-residue protein sequence, read N- to C-terminus: Protein Rev (116 aa).

Phosphoserine; by host CK2 occurs at positions 5 and 8. A homomultimerization region spans residues L18 to N26. Residues Y23 to Q49 form a disordered region. Positions T34 to R50 match the Nuclear localization signal and RNA-binding (RRE) motif. Basic residues predominate over residues Q36–E47. A Nuclear export signal and binding to XPO1 motif is present at residues L73–D84. 2 positions are modified to phosphoserine; by host: S92 and S99.

This sequence belongs to the HIV-1 REV protein family. In terms of assembly, homomultimer; when bound to the RRE. Multimeric assembly is essential for activity and may involve XPO1. Binds to human KPNB1, XPO1, TNPO1, RANBP5 and IPO7. Interacts with the viral Integrase. Interacts with human KHDRBS1. Interacts with human NAP1; this interaction decreases Rev multimerization and stimulates its activity. Interacts with human DEAD-box helicases DDX3 and DDX24; these interactions may serve for viral RNA export to the cytoplasm and packaging, respectively. Interacts with human PSIP1; this interaction may inhibit HIV-1 DNA integration by promoting dissociation of the Integrase-LEDGF/p75 complex. Asymmetrically arginine dimethylated at one site by host PRMT6. Methylation impairs the RNA-binding activity and export of viral RNA from the nucleus to the cytoplasm. Post-translationally, phosphorylated by protein kinase CK2. Presence of, and maybe binding to the N-terminus of the regulatory beta subunit of CK2 is necessary for CK2-mediated Rev's phosphorylation.

The protein localises to the host nucleus. Its subcellular location is the host nucleolus. It is found in the host cytoplasm. Functionally, escorts unspliced or incompletely spliced viral pre-mRNAs (late transcripts) out of the nucleus of infected cells. These pre-mRNAs carry a recognition sequence called Rev responsive element (RRE) located in the env gene, that is not present in fully spliced viral mRNAs (early transcripts). This function is essential since most viral proteins are translated from unspliced or partially spliced pre-mRNAs which cannot exit the nucleus by the pathway used by fully processed cellular mRNAs. Rev itself is translated from a fully spliced mRNA that readily exits the nucleus. Rev's nuclear localization signal (NLS) binds directly to KPNB1/Importin beta-1 without previous binding to KPNA1/Importin alpha-1. KPNB1 binds to the GDP bound form of RAN (Ran-GDP) and targets Rev to the nucleus. In the nucleus, the conversion from Ran-GDP to Ran-GTP dissociates Rev from KPNB1 and allows Rev's binding to the RRE in viral pre-mRNAs. Rev multimerization on the RRE via cooperative assembly exposes its nuclear export signal (NES) to the surface. Rev can then form a complex with XPO1/CRM1 and Ran-GTP, leading to nuclear export of the complex. Conversion from Ran-GTP to Ran-GDP mediates dissociation of the Rev/RRE/XPO1/RAN complex, so that Rev can return to the nucleus for a subsequent round of export. Beside KPNB1, also seems to interact with TNPO1/Transportin-1, RANBP5/IPO5 and IPO7/RANBP7 for nuclear import. The nucleoporin-like HRB/RIP is an essential cofactor that probably indirectly interacts with Rev to release HIV RNAs from the perinuclear region to the cytoplasm. This Human immunodeficiency virus type 1 group M subtype B (isolate HXB3) (HIV-1) protein is Protein Rev.